A 424-amino-acid polypeptide reads, in one-letter code: Tol-Pal system protein TolB (424 aa).

An N-terminal signal peptide occupies residues 1–20; that stretch reads MKQFIVFILSLYTTLSWAVL.

It belongs to the TolB family. The Tol-Pal system is composed of five core proteins: the inner membrane proteins TolA, TolQ and TolR, the periplasmic protein TolB and the outer membrane protein Pal. They form a network linking the inner and outer membranes and the peptidoglycan layer.

The protein localises to the periplasm. Its function is as follows. Part of the Tol-Pal system, which plays a role in outer membrane invagination during cell division and is important for maintaining outer membrane integrity. The chain is Tol-Pal system protein TolB from Vesicomyosocius okutanii subsp. Calyptogena okutanii (strain HA).